The chain runs to 307 residues: Protoheme IX farnesyltransferase (307 aa).

Helical transmembrane passes span 33–53 (IGIVNSNLITTFAGMWLAFYF), 62–82 (LHIVFFTLFGAALVIAGSCSI), 111–131 (RVLWLGVTLVAIGTMSLLMTT), 132–152 (VTAAIVGLIGVVTYVFLYTLW), 159–179 (LNTVVGSISGAVPPVIGWTAV), 185–205 (IVPLILFLIMFLWQPPHFLAL), 229–249 (MTKRQIIVWVACLLPLPFYLF), 251–271 (LGIPFLIVATVLNVGWLLLGL), and 287–307 (FVYSLNYLTILFVAMVIATIW).

Belongs to the UbiA prenyltransferase family. Protoheme IX farnesyltransferase subfamily. In terms of assembly, interacts with CtaA.

The protein resides in the cell membrane. It carries out the reaction heme b + (2E,6E)-farnesyl diphosphate + H2O = Fe(II)-heme o + diphosphate. It participates in porphyrin-containing compound metabolism; heme O biosynthesis; heme O from protoheme: step 1/1. Functionally, converts heme B (protoheme IX) to heme O by substitution of the vinyl group on carbon 2 of heme B porphyrin ring with a hydroxyethyl farnesyl side group. The polypeptide is Protoheme IX farnesyltransferase (Geobacillus thermodenitrificans (strain NG80-2)).